Consider the following 238-residue polypeptide: Expansin-like protein 5 (238 aa).

An N-terminal signal peptide occupies residues 1-21 (MRINFKLILIILTSFYGIINC). The Expansin-like EG45 domain occupies 45–145 (NGNCGFGKLT…VKVPCRVSGN (101 aa)). Disulfide bonds link Cys-48–Cys-78 and Cys-81–Cys-140. N-linked (GlcNAc...) asparagine glycosylation is present at Asn-89.

Belongs to the expansin family. Expansin A subfamily.

The protein localises to the secreted. May serve to lubricate the movement of the cellulose microfibrils during cell growth and wall extension and/or may serve to maintain the fluid state of the slug cell wall. The polypeptide is Expansin-like protein 5 (expl5) (Dictyostelium discoideum (Social amoeba)).